A 324-amino-acid chain; its full sequence is Envelope protein H3 (324 aa).

Over 1-284 (MAAVKTPVIV…FTTPLISFFG (284 aa)) the chain is Virion surface. A helical; Signal-anchor membrane pass occupies residues 285–305 (LFDINVIGLIVILFIMFMLIF). At 306-324 (NVKSKLLWFLTGTFVTAFI) the chain is on the intravirion side.

The protein belongs to the orthopoxvirus OPG108 family. In terms of processing, does not contain disulfide bonds.

The protein resides in the virion membrane. Its function is as follows. Envelope protein that binds to heparan sulfate on the cell surface and might provide virion attachment to target cell. The protein is Envelope protein H3 (OPG108) of Homo sapiens (Human).